Here is a 302-residue protein sequence, read N- to C-terminus: Bifunctional ligase/repressor BirA (302 aa).

Residues 14-33 (QPKVRSELEKFSKNLEEDIQ) constitute a DNA-binding region (H-T-H motif). A BPL/LPL catalytic domain is found at 62-236 (QISTALFPYS…HLYTRLNIFE (175 aa)). Biotin contacts are provided by residues 80-82 (STN), Q103, 107-109 (RGR), and K167.

The protein belongs to the biotin--protein ligase family.

The enzyme catalyses biotin + L-lysyl-[protein] + ATP = N(6)-biotinyl-L-lysyl-[protein] + AMP + diphosphate + H(+). Functionally, acts both as a biotin--[acetyl-CoA-carboxylase] ligase and a biotin-operon repressor. In the presence of ATP, BirA activates biotin to form the BirA-biotinyl-5'-adenylate (BirA-bio-5'-AMP or holoBirA) complex. HoloBirA can either transfer the biotinyl moiety to the biotin carboxyl carrier protein (BCCP) subunit of acetyl-CoA carboxylase, or bind to the biotin operator site and inhibit transcription of the operon. In Haemophilus influenzae (strain ATCC 51907 / DSM 11121 / KW20 / Rd), this protein is Bifunctional ligase/repressor BirA.